The following is a 513-amino-acid chain: Probable histone deacetylase 19 (513 aa).

Positions 23–334 (RRVCYFYDPD…WCYETGVALG (312 aa)) are histone deacetylase. The active-site Proton donor/acceptor is His154. 3 residues coordinate Zn(2+): Asp189, His191, and Asp277. 2 disordered regions span residues 384–432 (HAPS…ESSR) and 446–513 (ENAT…YHKP). Residues 398-409 (EIPEQDEDQDDP) are compositionally biased toward acidic residues. Basic and acidic residues predominate over residues 410-432 (DERHDPDSDMEVDDHKAVEESSR). Residues 492–504 (NVKNEPESSTKLQ) are compositionally biased toward polar residues.

Belongs to the histone deacetylase family. HD type 1 subfamily. It depends on Zn(2+) as a cofactor.

The protein resides in the nucleus. The enzyme catalyses N(6)-acetyl-L-lysyl-[histone] + H2O = L-lysyl-[histone] + acetate. In terms of biological role, responsible for the deacetylation of lysine residues on the N-terminal part of the core histones (H2A, H2B, H3 and H4). Histone deacetylation gives a tag for epigenetic repression and plays an important role in transcriptional regulation, cell cycle progression and developmental events. Histone deacetylases act via the formation of large multiprotein complexes. The protein is Probable histone deacetylase 19 of Zea mays (Maize).